The chain runs to 248 residues: MTKNLLNYLNELEAWLTNYVNEAHAQGVVVGLSGGVDSAVVAAMTKKLFPQNHLTLVMHINNSELDHKATTALVEQLQLNNKQVDLEPPYRAMLQALTIDPQKELMVAGNLKARLRMACLYTHAQKHNYLVLGTGNFIEYSLGYFTKWGDGACDVAPLAFLLKSDVYALSQHFNVPELVIERAPTASLFAGQTDEAEMGLTYKELDQYFQGHLQLSATKQQRVDHLRQSSQHKRSLPKTFKPLYSFQI.

An ATP-binding site is contributed by 31 to 38 (GLSGGVDS). Asp37 contacts Mg(2+). Arg114 contributes to the deamido-NAD(+) binding site. Residue Thr134 participates in ATP binding. Glu139 is a binding site for Mg(2+). Deamido-NAD(+)-binding residues include Lys147 and Asp154. ATP contacts are provided by Lys163 and Thr185. 232–233 (HK) serves as a coordination point for deamido-NAD(+).

The protein belongs to the NAD synthetase family. Homodimer.

It carries out the reaction deamido-NAD(+) + NH4(+) + ATP = AMP + diphosphate + NAD(+) + H(+). Its pathway is cofactor biosynthesis; NAD(+) biosynthesis; NAD(+) from deamido-NAD(+) (ammonia route): step 1/1. Its function is as follows. Catalyzes the ATP-dependent amidation of deamido-NAD to form NAD. Uses ammonia as a nitrogen source. The protein is NH(3)-dependent NAD(+) synthetase of Mycoplasma pneumoniae (strain ATCC 29342 / M129 / Subtype 1) (Mycoplasmoides pneumoniae).